A 333-amino-acid chain; its full sequence is Anthranilate phosphoribosyltransferase (333 aa).

5-phospho-alpha-D-ribose 1-diphosphate-binding positions include Gly-81, 84-85 (GN), Thr-89, 91-94 (NIST), 109-117 (KHGNRSVSS), and Ala-121. Gly-81 is a binding site for anthranilate. Ser-93 contacts Mg(2+). Asn-112 contributes to the anthranilate binding site. Arg-167 is a binding site for anthranilate. Residues Asp-225 and Glu-226 each contribute to the Mg(2+) site.

The protein belongs to the anthranilate phosphoribosyltransferase family. Homodimer. Requires Mg(2+) as cofactor.

The catalysed reaction is N-(5-phospho-beta-D-ribosyl)anthranilate + diphosphate = 5-phospho-alpha-D-ribose 1-diphosphate + anthranilate. The protein operates within amino-acid biosynthesis; L-tryptophan biosynthesis; L-tryptophan from chorismate: step 2/5. Its function is as follows. Catalyzes the transfer of the phosphoribosyl group of 5-phosphorylribose-1-pyrophosphate (PRPP) to anthranilate to yield N-(5'-phosphoribosyl)-anthranilate (PRA). This chain is Anthranilate phosphoribosyltransferase, found in Haemophilus influenzae (strain ATCC 51907 / DSM 11121 / KW20 / Rd).